A 777-amino-acid polypeptide reads, in one-letter code: Myotubularin-related protein 10 (777 aa).

Residues 196 to 217 are disordered; sequence PSGDGGGGGGGGNGAGGGSSQK. The segment covering 197–214 has biased composition (gly residues); it reads SGDGGGGGGGGNGAGGGS. The 441-residue stretch at 221 to 661 folds into the Myotubularin phosphatase domain; the sequence is FETYSDWDRE…THIKLWKLCY (441 aa). Residues Ser-607 and Ser-751 each carry the phosphoserine modification.

This sequence belongs to the protein-tyrosine phosphatase family. Non-receptor class myotubularin subfamily.

This Homo sapiens (Human) protein is Myotubularin-related protein 10 (MTMR10).